Consider the following 257-residue polypeptide: Homeobox protein goosecoid (257 aa).

Positions 160 to 219 form a DNA-binding region, homeobox; it reads KRRHRTIFTDEQLEALENLFQETKYPDVGTREQLARKVHLREEKVEVWFKNRRAKWRRQK. A disordered region spans residues 213 to 257; that stretch reads AKWRRQKRSSSEESENAEKWNKTSSSKASPEKREEEGKSDLDSDS. The segment covering 241-257 has biased composition (basic and acidic residues); that stretch reads SPEKREEEGKSDLDSDS.

The protein belongs to the paired homeobox family. Bicoid subfamily.

It is found in the nucleus. Its function is as follows. Regulates chordin (CHRD). May play a role in spatial programing within discrete embryonic fields or lineage compartments during organogenesis. In concert with NKX3-2, plays a role in defining the structural components of the middle ear; required for the development of the entire tympanic ring. Probably involved in the regulatory networks that define neural crest cell fate specification and determine mesoderm cell lineages in mammals. The sequence is that of Homeobox protein goosecoid (GSC) from Saguinus labiatus (Red-chested mustached tamarin).